We begin with the raw amino-acid sequence, 110 residues long: Iron-sulfur cluster insertion protein ErpA (110 aa).

Residues cysteine 38, cysteine 102, and cysteine 104 each coordinate iron-sulfur cluster.

Belongs to the HesB/IscA family. Homodimer. Iron-sulfur cluster is required as a cofactor.

In terms of biological role, required for insertion of 4Fe-4S clusters for at least IspG. The protein is Iron-sulfur cluster insertion protein ErpA of Marinobacter nauticus (strain ATCC 700491 / DSM 11845 / VT8) (Marinobacter aquaeolei).